A 185-amino-acid chain; its full sequence is Ribosome-recycling factor (185 aa).

It belongs to the RRF family.

The protein localises to the cytoplasm. Functionally, responsible for the release of ribosomes from messenger RNA at the termination of protein biosynthesis. May increase the efficiency of translation by recycling ribosomes from one round of translation to another. The sequence is that of Ribosome-recycling factor from Campylobacter jejuni subsp. jejuni serotype O:2 (strain ATCC 700819 / NCTC 11168).